The chain runs to 385 residues: Homoserine O-succinyltransferase (385 aa).

One can recognise an AB hydrolase-1 domain in the interval 51-360 (NAVLICHALS…DSPHGHDAFL (310 aa)). Ser157 (nucleophile) is an active-site residue. A substrate-binding site is contributed by Arg227. Active-site residues include Asp323 and His356. Asp357 is a substrate binding site.

It belongs to the AB hydrolase superfamily. MetX family. Homodimer.

Its subcellular location is the cytoplasm. It catalyses the reaction L-homoserine + succinyl-CoA = O-succinyl-L-homoserine + CoA. Its pathway is amino-acid biosynthesis; L-methionine biosynthesis via de novo pathway; O-succinyl-L-homoserine from L-homoserine: step 1/1. Transfers a succinyl group from succinyl-CoA to L-homoserine, forming succinyl-L-homoserine. The chain is Homoserine O-succinyltransferase from Hahella chejuensis (strain KCTC 2396).